The following is a 383-amino-acid chain: S-adenosylmethionine synthase (383 aa).

Residue H15 participates in ATP binding. D17 is a Mg(2+) binding site. E43 contacts K(+). The L-methionine site is built by E56 and Q99. The segment at 99–109 (QSPDINQGVDR) is flexible loop. ATP is bound by residues 164 to 166 (DAK), 230 to 231 (RF), D239, 245 to 246 (RK), A262, and K266. Residue D239 coordinates L-methionine. K270 serves as a coordination point for L-methionine.

The protein belongs to the AdoMet synthase family. As to quaternary structure, homotetramer; dimer of dimers. The cofactor is Mg(2+). Requires K(+) as cofactor.

It localises to the cytoplasm. It catalyses the reaction L-methionine + ATP + H2O = S-adenosyl-L-methionine + phosphate + diphosphate. Its pathway is amino-acid biosynthesis; S-adenosyl-L-methionine biosynthesis; S-adenosyl-L-methionine from L-methionine: step 1/1. In terms of biological role, catalyzes the formation of S-adenosylmethionine (AdoMet) from methionine and ATP. The overall synthetic reaction is composed of two sequential steps, AdoMet formation and the subsequent tripolyphosphate hydrolysis which occurs prior to release of AdoMet from the enzyme. In Pectobacterium atrosepticum (strain SCRI 1043 / ATCC BAA-672) (Erwinia carotovora subsp. atroseptica), this protein is S-adenosylmethionine synthase.